The following is a 274-amino-acid chain: 4-hydroxy-tetrahydrodipicolinate reductase (274 aa).

NAD(+) contacts are provided by residues 8–13 (GALGRM), glutamate 34, 102–104 (GTT), and 128–131 (SQNF). Residue histidine 160 is the Proton donor/acceptor of the active site. Histidine 161 is a (S)-2,3,4,5-tetrahydrodipicolinate binding site. Catalysis depends on lysine 164, which acts as the Proton donor. Residue 170 to 171 (GT) coordinates (S)-2,3,4,5-tetrahydrodipicolinate.

Belongs to the DapB family.

Its subcellular location is the cytoplasm. The catalysed reaction is (S)-2,3,4,5-tetrahydrodipicolinate + NAD(+) + H2O = (2S,4S)-4-hydroxy-2,3,4,5-tetrahydrodipicolinate + NADH + H(+). The enzyme catalyses (S)-2,3,4,5-tetrahydrodipicolinate + NADP(+) + H2O = (2S,4S)-4-hydroxy-2,3,4,5-tetrahydrodipicolinate + NADPH + H(+). It participates in amino-acid biosynthesis; L-lysine biosynthesis via DAP pathway; (S)-tetrahydrodipicolinate from L-aspartate: step 4/4. Its function is as follows. Catalyzes the conversion of 4-hydroxy-tetrahydrodipicolinate (HTPA) to tetrahydrodipicolinate. This is 4-hydroxy-tetrahydrodipicolinate reductase from Methanocaldococcus jannaschii (strain ATCC 43067 / DSM 2661 / JAL-1 / JCM 10045 / NBRC 100440) (Methanococcus jannaschii).